Here is a 164-residue protein sequence, read N- to C-terminus: Peptidyl-prolyl cis-trans isomerase A-like 4H (164 aa).

The 157-residue stretch at 7-163 folds into the PPIase cyclophilin-type domain; sequence FFDITVDGKP…KKITIADCGQ (157 aa). N-linked (GlcNAc...) asparagine glycosylation is found at Asn-71 and Asn-108.

The protein belongs to the cyclophilin-type PPIase family. PPIase A subfamily.

Its subcellular location is the cytoplasm. It carries out the reaction [protein]-peptidylproline (omega=180) = [protein]-peptidylproline (omega=0). In terms of biological role, PPIases accelerate the folding of proteins. It catalyzes the cis-trans isomerization of proline imidic peptide bonds in oligopeptides. The sequence is that of Peptidyl-prolyl cis-trans isomerase A-like 4H from Homo sapiens (Human).